We begin with the raw amino-acid sequence, 314 residues long: 4-hydroxy-3-methylbut-2-enyl diphosphate reductase (314 aa).

Cys-12 contacts [4Fe-4S] cluster. His-41 and His-74 together coordinate (2E)-4-hydroxy-3-methylbut-2-enyl diphosphate. His-41 and His-74 together coordinate dimethylallyl diphosphate. His-41 and His-74 together coordinate isopentenyl diphosphate. Residue Cys-96 coordinates [4Fe-4S] cluster. Position 124 (His-124) interacts with (2E)-4-hydroxy-3-methylbut-2-enyl diphosphate. Dimethylallyl diphosphate is bound at residue His-124. An isopentenyl diphosphate-binding site is contributed by His-124. Residue Glu-126 is the Proton donor of the active site. Residue Thr-167 coordinates (2E)-4-hydroxy-3-methylbut-2-enyl diphosphate. Cys-197 provides a ligand contact to [4Fe-4S] cluster. (2E)-4-hydroxy-3-methylbut-2-enyl diphosphate-binding residues include Ser-225, Ser-226, Asn-227, and Ser-269. Positions 225, 226, 227, and 269 each coordinate dimethylallyl diphosphate. Residues Ser-225, Ser-226, Asn-227, and Ser-269 each coordinate isopentenyl diphosphate.

Belongs to the IspH family. Requires [4Fe-4S] cluster as cofactor.

The enzyme catalyses isopentenyl diphosphate + 2 oxidized [2Fe-2S]-[ferredoxin] + H2O = (2E)-4-hydroxy-3-methylbut-2-enyl diphosphate + 2 reduced [2Fe-2S]-[ferredoxin] + 2 H(+). It catalyses the reaction dimethylallyl diphosphate + 2 oxidized [2Fe-2S]-[ferredoxin] + H2O = (2E)-4-hydroxy-3-methylbut-2-enyl diphosphate + 2 reduced [2Fe-2S]-[ferredoxin] + 2 H(+). It functions in the pathway isoprenoid biosynthesis; dimethylallyl diphosphate biosynthesis; dimethylallyl diphosphate from (2E)-4-hydroxy-3-methylbutenyl diphosphate: step 1/1. Its pathway is isoprenoid biosynthesis; isopentenyl diphosphate biosynthesis via DXP pathway; isopentenyl diphosphate from 1-deoxy-D-xylulose 5-phosphate: step 6/6. Catalyzes the conversion of 1-hydroxy-2-methyl-2-(E)-butenyl 4-diphosphate (HMBPP) into a mixture of isopentenyl diphosphate (IPP) and dimethylallyl diphosphate (DMAPP). Acts in the terminal step of the DOXP/MEP pathway for isoprenoid precursor biosynthesis. This is 4-hydroxy-3-methylbut-2-enyl diphosphate reductase from Haemophilus influenzae (strain ATCC 51907 / DSM 11121 / KW20 / Rd).